We begin with the raw amino-acid sequence, 187 residues long: Coiled-coil domain-containing protein 201 (187 aa).

2 disordered regions span residues 1-79 (MEPG…PPAT) and 92-159 (KESS…RAAA). A coiled-coil region spans residues 111–131 (LTQRQRQRQQQQQQQESLRAK). Residues 147–157 (GRKRRDPKKRA) are compositionally biased toward basic residues.

This Homo sapiens (Human) protein is Coiled-coil domain-containing protein 201.